The chain runs to 178 residues: ATP synthase subunit delta (178 aa).

It belongs to the ATPase delta chain family. As to quaternary structure, F-type ATPases have 2 components, F(1) - the catalytic core - and F(0) - the membrane proton channel. F(1) has five subunits: alpha(3), beta(3), gamma(1), delta(1), epsilon(1). F(0) has three main subunits: a(1), b(2) and c(10-14). The alpha and beta chains form an alternating ring which encloses part of the gamma chain. F(1) is attached to F(0) by a central stalk formed by the gamma and epsilon chains, while a peripheral stalk is formed by the delta and b chains.

It localises to the cell membrane. F(1)F(0) ATP synthase produces ATP from ADP in the presence of a proton or sodium gradient. F-type ATPases consist of two structural domains, F(1) containing the extramembraneous catalytic core and F(0) containing the membrane proton channel, linked together by a central stalk and a peripheral stalk. During catalysis, ATP synthesis in the catalytic domain of F(1) is coupled via a rotary mechanism of the central stalk subunits to proton translocation. Its function is as follows. This protein is part of the stalk that links CF(0) to CF(1). It either transmits conformational changes from CF(0) to CF(1) or is implicated in proton conduction. In Streptococcus pyogenes serotype M1, this protein is ATP synthase subunit delta.